The chain runs to 164 residues: Small ribosomal subunit protein uS5 (164 aa).

An S5 DRBM domain is found at 10–73 (LEERVVAVNR…DDAKKNLIEV (64 aa)).

The protein belongs to the universal ribosomal protein uS5 family. As to quaternary structure, part of the 30S ribosomal subunit. Contacts proteins S4 and S8.

With S4 and S12 plays an important role in translational accuracy. In terms of biological role, located at the back of the 30S subunit body where it stabilizes the conformation of the head with respect to the body. In Streptococcus pneumoniae serotype 2 (strain D39 / NCTC 7466), this protein is Small ribosomal subunit protein uS5.